Here is a 235-residue protein sequence, read N- to C-terminus: Proteasome subunit alpha type-2 (235 aa).

It belongs to the peptidase T1A family. The 26S proteasome consists of a 20S proteasome core and two 19S regulatory subunits. The 20S proteasome core is composed of 28 subunits that are arranged in four stacked rings, resulting in a barrel-shaped structure. The two end rings are each formed by seven alpha subunits, and the two central rings are each formed by seven beta subunits. The catalytic chamber with the active sites is on the inside of the barrel.

Its subcellular location is the cytoplasm. It localises to the nucleus. Functionally, the proteasome is a multicatalytic proteinase complex which is characterized by its ability to cleave peptides with Arg, Phe, Tyr, Leu, and Glu adjacent to the leaving group at neutral or slightly basic pH. The proteasome has an ATP-dependent proteolytic activity. This Oryza sativa subsp. indica (Rice) protein is Proteasome subunit alpha type-2 (PAB1).